We begin with the raw amino-acid sequence, 465 residues long: ATP synthase subunit beta (465 aa).

154–161 (GGAGVGKT) provides a ligand contact to ATP.

The protein belongs to the ATPase alpha/beta chains family. In terms of assembly, F-type ATPases have 2 components, CF(1) - the catalytic core - and CF(0) - the membrane proton channel. CF(1) has five subunits: alpha(3), beta(3), gamma(1), delta(1), epsilon(1). CF(0) has three main subunits: a(1), b(2) and c(9-12). The alpha and beta chains form an alternating ring which encloses part of the gamma chain. CF(1) is attached to CF(0) by a central stalk formed by the gamma and epsilon chains, while a peripheral stalk is formed by the delta and b chains.

It localises to the cell inner membrane. The catalysed reaction is ATP + H2O + 4 H(+)(in) = ADP + phosphate + 5 H(+)(out). In terms of biological role, produces ATP from ADP in the presence of a proton gradient across the membrane. The catalytic sites are hosted primarily by the beta subunits. The chain is ATP synthase subunit beta from Methylobacillus flagellatus (strain ATCC 51484 / DSM 6875 / VKM B-1610 / KT).